A 314-amino-acid polypeptide reads, in one-letter code: 2,3-dihydroxyphenylpropionate/2,3-dihydroxicinnamic acid 1,2-dioxygenase (314 aa).

The Proton donor role is filled by His115. The active-site Proton acceptor is His179.

Belongs to the LigB/MhpB extradiol dioxygenase family. In terms of assembly, homotetramer. The cofactor is Fe(2+).

The enzyme catalyses 3-(2,3-dihydroxyphenyl)propanoate + O2 = (2Z,4E)-2-hydroxy-6-oxonona-2,4-dienedioate + H(+). It carries out the reaction (2E)-3-(2,3-dihydroxyphenyl)prop-2-enoate + O2 = (2Z,4E,7E)-2-hydroxy-6-oxonona-2,4,7-trienedioate + H(+). It participates in aromatic compound metabolism; 3-phenylpropanoate degradation. Functionally, catalyzes the non-heme iron(II)-dependent oxidative cleavage of 2,3-dihydroxyphenylpropionic acid and 2,3-dihydroxicinnamic acid into 2-hydroxy-6-ketononadienedioate and 2-hydroxy-6-ketononatrienedioate, respectively. In Escherichia coli O81 (strain ED1a), this protein is 2,3-dihydroxyphenylpropionate/2,3-dihydroxicinnamic acid 1,2-dioxygenase.